Here is a 275-residue protein sequence, read N- to C-terminus: Notch homolog 2 N-terminal-like protein B (275 aa).

The first 25 residues, 1 to 25 (MPALRPALLWALLALWLCCATPAHA), serve as a signal peptide directing secretion. 4 EGF-like domains span residues 26-63 (LQCR…EYCQ), 64-102 (HRDP…EDCQ), 105-143 (TSHP…KECQ), and 144-180 (WTDA…QKCE). 17 disulfide bridges follow: C28/C41, C35/C51, C53/C62, C68/C79, C73/C90, C92/C101, C109/C121, C115/C131, C133/C142, C148/C159, C153/C168, C170/C179, C186/C198, C192/C207, C209/C218, C225/C236, and C230/C246. N-linked (GlcNAc...) asparagine glycosylation occurs at N46. N155 is a glycosylation site (N-linked (GlcNAc...) asparagine). The 38-residue stretch at 182-219 (DVNECDIPGHCQHGGICLNLPGSYQCQCLQGFTGQYCD) folds into the EGF-like 5; calcium-binding domain. Positions 221-258 (LYVPCAPSPCVNGGTCRQTGDFTFECNCLPETVRRGTE) constitute an EGF-like 6 domain.

This sequence belongs to the NOTCH family. Interacts with NOTCH2. Interacts with DLL1; the interaction is direct. As to expression, expressed in radial glia neural stem cells during cortical development.

The protein resides in the secreted. Its function is as follows. Human-specific protein that promotes neural progenitor proliferation and evolutionary expansion of the brain neocortex by regulating the Notch signaling pathway. Able to promote neural progenitor self-renewal, possibly by down-regulating neuronal differentiation genes, thereby delaying the differentiation of neuronal progenitors and leading to an overall final increase in neuronal production. Acts by enhancing the Notch signaling pathway via two different mechanisms that probably work in parallel to reach the same effect. Enhances Notch signaling pathway in a non-cell-autonomous manner via direct interaction with NOTCH2. Also promotes Notch signaling pathway in a cell-autonomous manner through inhibition of cis DLL1-NOTCH2 interactions, which promotes neuronal differentiation. The polypeptide is Notch homolog 2 N-terminal-like protein B (Homo sapiens (Human)).